Reading from the N-terminus, the 309-residue chain is Olfactory receptor 7A40 (309 aa).

The Extracellular portion of the chain corresponds to M1–F26. An N-linked (GlcNAc...) asparagine glycan is attached at N5. The helical transmembrane segment at L27–I47 threads the bilayer. Residues A48–T57 are Cytoplasmic-facing. Residues P58–I78 traverse the membrane as a helical segment. The Extracellular portion of the chain corresponds to P79–C97. Cysteines 97 and 179 form a disulfide. The helical transmembrane segment at I98–M118 threads the bilayer. Residues A119–R139 lie on the Cytoplasmic side of the membrane. A helical membrane pass occupies residues L140–S160. The Extracellular segment spans residues S161–D196. A helical membrane pass occupies residues M197–S217. The Cytoplasmic segment spans residues Y218–H244. A helical transmembrane segment spans residues L245–T265. Over Q266–H269 the chain is Extracellular. Residues S270–L292 form a helical membrane-spanning segment. Topologically, residues R293 to S309 are cytoplasmic.

This sequence belongs to the G-protein coupled receptor 1 family.

Its subcellular location is the cell membrane. Its function is as follows. Odorant receptor. This is Olfactory receptor 7A40 from Mus musculus (Mouse).